The sequence spans 466 residues: GTPase Der (466 aa).

EngA-type G domains follow at residues 3–167 (PTLV…PDEP) and 176–350 (PKIA…GAAM). GTP is bound by residues 9–16 (GRSNVGKS), 56–60 (DTGGF), 119–122 (NKTE), 182–189 (GRPNVGKS), 229–233 (DTAGL), and 294–297 (NKWD). The 85-residue stretch at 351 to 435 (AHLPTPRLTR…PLRIEFRTGR (85 aa)) folds into the KH-like domain. Residues 433–466 (TGRNPYAGKSPAPLTEAEAKRAHRRRRYGRKKYG) form a disordered region. Basic residues predominate over residues 453-466 (RAHRRRRYGRKKYG).

It belongs to the TRAFAC class TrmE-Era-EngA-EngB-Septin-like GTPase superfamily. EngA (Der) GTPase family. As to quaternary structure, associates with the 50S ribosomal subunit.

Functionally, GTPase that plays an essential role in the late steps of ribosome biogenesis. This is GTPase Der from Nitrosospira multiformis (strain ATCC 25196 / NCIMB 11849 / C 71).